The following is a 1134-amino-acid chain: Vinculin (1134 aa).

An N-terminal globular head region spans residues 1–835 (MPVFHTRTIE…GAVAKVREAF (835 aa)). The residue at position 97 (S97) is a Phosphoserine. The tract at residues 168–208 (MTKMAKMIDERQQELTHQEHRVMLVNSMNTVKELLPVLISA) is talin-interaction. The residue at position 173 (K173) is an N6-acetyllysine. Tandem repeats lie at residues 259 to 369 (ASKD…KVEN), 370 to 479 (AARK…KTNR), and 480 to 589 (AVAN…RMQE). The 3 X 112 AA tandem repeats stretch occupies residues 259 to 589 (ASKDTEAMKR…LKDLKARMQE (331 aa)). Phosphoserine is present on residues S260, S272, S275, S288, S290, S346, and S434. Position 496 is an N6-acetyllysine (K496). A Phosphotyrosine modification is found at Y537. S574, S579, and S600 each carry phosphoserine. A phosphothreonine mark is found at T604 and T672. S721 is subject to Phosphoserine. The interaction with ACTN4 stretch occupies residues 741–764 (MANIQPQMLVAGATSIARRANRIL). Phosphoserine occurs at positions 795 and 809. Y822 carries the post-translational modification Phosphotyrosine. Positions 836 to 878 (QPQEPDFPPPPPDLEQLRLTDELAPPKPPLPEGEVPPPRPPPP) are linker (Pro-rich). The interval 857 to 887 (ELAPPKPPLPEGEVPPPRPPPPEEKDEEFPE) is disordered. Positions 860–876 (PPKPPLPEGEVPPPRPP) are enriched in pro residues. The interval 879-1134 (EEKDEEFPEQ…RWVRKTPWYQ (256 aa)) is C-terminal tail. Facilitates phospholipid membrane insertion regions lie at residues 1003–1046 (RLVR…KRIR) and 1120–1134 (AGFT…PWYQ). The residue at position 1133 (Y1133) is a Phosphotyrosine; by SRC-type Tyr-kinases.

Belongs to the vinculin/alpha-catenin family. As to quaternary structure, exhibits self-association properties. Part of a complex composed of THSD1, PTK2/FAK1, TLN1 and VCL. Interacts with APBB1IP and NRAP. Interacts with TLN1. Interacts with CTNNB1 and this interaction is necessary for its localization to the cell-cell junctions and for its function in regulating cell surface expression of E-cadherin. Interacts with SYNM. Interacts with SORBS1. Interacts with CTNNA1. Binds to ACTN4; this interaction triggers conformational changes. Interacts with FLII. (Microbial infection) Interacts via its globular head domain with the central portion of S.flexneri IcsA (also called VirG). Phosphorylated; on serines, threonines and tyrosines. Phosphorylation on Tyr-1133 in activated platelets affects head-tail interactions and cell spreading but has no effect on actin binding nor on localization to focal adhesion plaques. In terms of processing, acetylated; mainly by myristic acid but also by a small amount of palmitic acid. Metavinculin is muscle-specific.

The protein localises to the cell membrane. It localises to the cell junction. Its subcellular location is the adherens junction. It is found in the focal adhesion. The protein resides in the cytoplasm. The protein localises to the cytoskeleton. It localises to the sarcolemma. Its subcellular location is the cell projection. It is found in the podosome. Its function is as follows. Actin filament (F-actin)-binding protein involved in cell-matrix adhesion and cell-cell adhesion. Regulates cell-surface E-cadherin expression and potentiates mechanosensing by the E-cadherin complex. May also play important roles in cell morphology and locomotion. This is Vinculin (VCL) from Homo sapiens (Human).